Consider the following 347-residue polypeptide: Methylthioribose-1-phosphate isomerase (347 aa).

Residues 46–48, Arg89, and Gln196 contribute to the substrate site; that span reads RGA. Asp237 acts as the Proton donor in catalysis. 247 to 248 serves as a coordination point for substrate; that stretch reads NK.

This sequence belongs to the eIF-2B alpha/beta/delta subunits family. MtnA subfamily.

The enzyme catalyses 5-(methylsulfanyl)-alpha-D-ribose 1-phosphate = 5-(methylsulfanyl)-D-ribulose 1-phosphate. It participates in amino-acid biosynthesis; L-methionine biosynthesis via salvage pathway; L-methionine from S-methyl-5-thio-alpha-D-ribose 1-phosphate: step 1/6. In terms of biological role, catalyzes the interconversion of methylthioribose-1-phosphate (MTR-1-P) into methylthioribulose-1-phosphate (MTRu-1-P). This chain is Methylthioribose-1-phosphate isomerase, found in Chloroflexus aurantiacus (strain ATCC 29366 / DSM 635 / J-10-fl).